We begin with the raw amino-acid sequence, 390 residues long: MSIQSLLDYISVIPDIRQQGKVKHKLSDILFLTVCAVIAGADEWQEIEDFGHERLEWLKKYGDFDNGIPVDDTIARVVSNIDSLAFEKIFIEWMQECHEITDGEIIAIDGKTIRGSFDKGKRKGAIHMVSAFSNENGVVLGQVKTEAKSNEITAIPELLNLLDLKKNLITIDAMGCQKDIASKIKDKKADYLLAVKGNQGKLHHAFEEKFPVNVFSNYKGDSFSTQEISHGRKETRLHIVSNVTPEFCDFEFEWKGLKKLCVALSFRQKKEDKSAEGVSIRYYISSKDMDAKEFAHAIRAHWLIEHSLHWVLDVKMNEDASRIRRGNAAEIISGIKKMALNLLRDCKDIKGGVKRKRKKVALNTCYIEEVLASCSELGFRTDKMKNLTQI.

This sequence belongs to the transposase 11 family.

The sequence is that of Putative transposase YncI (yncI) from Escherichia coli O157:H7.